Consider the following 902-residue polypeptide: Respiratory nitrate reductase alpha chain (902 aa).

[4Fe-4S] cluster-binding residues include His-29, Cys-33, and Cys-37.

It belongs to the prokaryotic molybdopterin-containing oxidoreductase family. Heterotrimer composed of an alpha, a beta and a gamma chain. Alpha and beta are catalytic chains; gamma chains are involved in binding the enzyme complex to the cytoplasmic membrane. [4Fe-4S] cluster serves as cofactor. Requires Mo-bis(molybdopterin guanine dinucleotide) as cofactor.

The protein resides in the cell membrane. It is found in the cytoplasm. The catalysed reaction is nitrate + a quinol = a quinone + nitrite + H2O. Inhibited by micromolar concentrations of azide. The nitrate reductase enzyme complex allows Bradyrhizobium sp. USDA 3045 to use nitrate as an electron acceptor during anaerobic growth. The alpha chain is the actual site of nitrate reduction. The chain is Respiratory nitrate reductase alpha chain (narG) from Bradyrhizobium sp.